The chain runs to 144 residues: DNA-directed RNA polymerases II and V subunit 6B (144 aa).

Residues Met-1–Asp-32 are compositionally biased toward acidic residues. The interval Met-1–Ser-62 is disordered. A compositionally biased stretch (basic and acidic residues) spans Thr-46 to Gln-56.

This sequence belongs to the archaeal Rpo6/eukaryotic RPB6 RNA polymerase subunit family. In terms of assembly, component of the RNA polymerase II and V complexes.

It localises to the nucleus. Its function is as follows. DNA-dependent RNA polymerase catalyzes the transcription of DNA into RNA using the four ribonucleoside triphosphates as substrates. Component of RNA polymerase II which synthesizes mRNA precursors and many functional non-coding RNAs. Pol II is the central component of the basal RNA polymerase II transcription machinery. It is composed of mobile elements that move relative to each other. Component of RNA polymerase V which mediates RNA-directed DNA methylation-dependent (RdDM) transcriptional gene silencing (TGS) of endogenous repeated sequences, including transposable elements. The sequence is that of DNA-directed RNA polymerases II and V subunit 6B (NRPB6B) from Arabidopsis thaliana (Mouse-ear cress).